We begin with the raw amino-acid sequence, 272 residues long: Hydroxyethylthiazole kinase (272 aa).

Met-45 serves as a coordination point for substrate. ATP contacts are provided by Arg-121 and Thr-168. Gly-195 contributes to the substrate binding site.

Belongs to the Thz kinase family. As to quaternary structure, homotrimer. The cofactor is Mg(2+).

It catalyses the reaction 5-(2-hydroxyethyl)-4-methylthiazole + ATP = 4-methyl-5-(2-phosphooxyethyl)-thiazole + ADP + H(+). Its pathway is cofactor biosynthesis; thiamine diphosphate biosynthesis; 4-methyl-5-(2-phosphoethyl)-thiazole from 5-(2-hydroxyethyl)-4-methylthiazole: step 1/1. In terms of biological role, catalyzes the phosphorylation of the hydroxyl group of 4-methyl-5-beta-hydroxyethylthiazole (THZ). The polypeptide is Hydroxyethylthiazole kinase (Bacillus subtilis (strain 168)).